A 229-amino-acid chain; its full sequence is Zinc finger matrin-type protein 4 (229 aa).

2 consecutive Matrin-type zinc fingers follow at residues 14-44 and 72-106; these read SYCK…KVRL and DKNK…LKLL. The disordered stretch occupies residues 116–135; that stretch reads TATPLSPLKPPRMDTAPVVA. 2 consecutive Matrin-type zinc fingers follow at residues 145 to 175 and 198 to 228; these read RYCG…NAAR and YRCT…NLKN.

Its subcellular location is the nucleus. This Homo sapiens (Human) protein is Zinc finger matrin-type protein 4 (ZMAT4).